Consider the following 97-residue polypeptide: Co-chaperonin GroES (97 aa).

The protein belongs to the GroES chaperonin family. Heptamer of 7 subunits arranged in a ring. Interacts with the chaperonin GroEL.

The protein resides in the cytoplasm. In terms of biological role, together with the chaperonin GroEL, plays an essential role in assisting protein folding. The GroEL-GroES system forms a nano-cage that allows encapsulation of the non-native substrate proteins and provides a physical environment optimized to promote and accelerate protein folding. GroES binds to the apical surface of the GroEL ring, thereby capping the opening of the GroEL channel. This Escherichia fergusonii (strain ATCC 35469 / DSM 13698 / CCUG 18766 / IAM 14443 / JCM 21226 / LMG 7866 / NBRC 102419 / NCTC 12128 / CDC 0568-73) protein is Co-chaperonin GroES.